The chain runs to 269 residues: Energy-coupling factor transporter transmembrane protein EcfT (269 aa).

Helical transmembrane passes span 28–48 (MIIY…LLLL), 49–69 (AFTL…FNGV), 73–93 (IGII…GSVL), 109–129 (AILI…LTLT), and 246–266 (TLAI…KSPS).

This sequence belongs to the energy-coupling factor EcfT family. Forms a stable energy-coupling factor (ECF) transporter complex composed of 2 membrane-embedded substrate-binding proteins (S component), 2 ATP-binding proteins (A component) and 2 transmembrane proteins (T component). May be able to interact with more than 1 S component at a time.

The protein localises to the cell membrane. Functionally, transmembrane (T) component of an energy-coupling factor (ECF) ABC-transporter complex. Unlike classic ABC transporters this ECF transporter provides the energy necessary to transport a number of different substrates. This is Energy-coupling factor transporter transmembrane protein EcfT from Streptococcus equi subsp. equi (strain 4047).